The chain runs to 240 residues: HTH-type transcriptional repressor STM4068 (240 aa).

The region spanning T9–V77 is the HTH gntR-type domain. The H-T-H motif DNA-binding region spans Q37–S56.

Functionally, represses the expression of the STM4065-STM4067 operon. In Salmonella typhimurium (strain LT2 / SGSC1412 / ATCC 700720), this protein is HTH-type transcriptional repressor STM4068.